The sequence spans 467 residues: ATP-dependent protease ATPase subunit HslU (467 aa).

Residues valine 22 and 64–69 contribute to the ATP site; that span reads GVGKTE. Positions 149–192 are disordered; that stretch reads QTNNPLESLFGGAIPNFGQNNEDEEEPPTEEIKTKRSEIKRQLE. Over residues 178 to 192 the composition is skewed to basic and acidic residues; sequence EEIKTKRSEIKRQLE. Positions 280, 345, and 417 each coordinate ATP.

The protein belongs to the ClpX chaperone family. HslU subfamily. As to quaternary structure, a double ring-shaped homohexamer of HslV is capped on each side by a ring-shaped HslU homohexamer. The assembly of the HslU/HslV complex is dependent on binding of ATP.

It is found in the cytoplasm. In terms of biological role, ATPase subunit of a proteasome-like degradation complex; this subunit has chaperone activity. The binding of ATP and its subsequent hydrolysis by HslU are essential for unfolding of protein substrates subsequently hydrolyzed by HslV. HslU recognizes the N-terminal part of its protein substrates and unfolds these before they are guided to HslV for hydrolysis. This chain is ATP-dependent protease ATPase subunit HslU, found in Staphylococcus aureus (strain bovine RF122 / ET3-1).